We begin with the raw amino-acid sequence, 503 residues long: ATP synthase subunit alpha (503 aa).

170–177 provides a ligand contact to ATP; that stretch reads GDKQTGKT.

The protein belongs to the ATPase alpha/beta chains family. F-type ATPases have 2 components, CF(1) - the catalytic core - and CF(0) - the membrane proton channel. CF(1) has five subunits: alpha(3), beta(3), gamma(1), delta(1), epsilon(1). CF(0) has three main subunits: a(1), b(2) and c(9-12). The alpha and beta chains form an alternating ring which encloses part of the gamma chain. CF(1) is attached to CF(0) by a central stalk formed by the gamma and epsilon chains, while a peripheral stalk is formed by the delta and b chains.

It is found in the cell inner membrane. It catalyses the reaction ATP + H2O + 4 H(+)(in) = ADP + phosphate + 5 H(+)(out). Its function is as follows. Produces ATP from ADP in the presence of a proton gradient across the membrane. The alpha chain is a regulatory subunit. The chain is ATP synthase subunit alpha from Helicobacter pylori (strain HPAG1).